The chain runs to 273 residues: NH(3)-dependent NAD(+) synthetase (273 aa).

Gly-46–Ser-53 is a binding site for ATP. A Mg(2+)-binding site is contributed by Asp-52. Arg-139 contributes to the deamido-NAD(+) binding site. Thr-159 is a binding site for ATP. Glu-164 provides a ligand contact to Mg(2+). The deamido-NAD(+) site is built by Lys-172 and Asp-179. Residues Lys-188 and Thr-210 each contribute to the ATP site. His-259 to Lys-260 is a binding site for deamido-NAD(+).

Belongs to the NAD synthetase family. As to quaternary structure, homodimer.

It catalyses the reaction deamido-NAD(+) + NH4(+) + ATP = AMP + diphosphate + NAD(+) + H(+). Its pathway is cofactor biosynthesis; NAD(+) biosynthesis; NAD(+) from deamido-NAD(+) (ammonia route): step 1/1. Its function is as follows. Catalyzes the ATP-dependent amidation of deamido-NAD to form NAD. Uses ammonia as a nitrogen source. The sequence is that of NH(3)-dependent NAD(+) synthetase from Streptococcus agalactiae serotype Ia (strain ATCC 27591 / A909 / CDC SS700).